A 223-amino-acid polypeptide reads, in one-letter code: Ethylene-inducing xylanase 1 (223 aa).

The signal sequence occupies residues 1 to 19 (MVSFTSLLAAFSVVSGVLT). A GH11 domain is found at 34 to 223 (KRTPSSTGTS…SSGSATMTVS (190 aa)). Glu119 acts as the Nucleophile in catalysis. A nuclear localization signal region spans residues 174 to 184 (RRTKRTSGSVN). Glu210 functions as the Proton donor in the catalytic mechanism.

The protein belongs to the glycosyl hydrolase 11 (cellulase G) family.

It is found in the secreted. It localises to the host nucleus. It catalyses the reaction Endohydrolysis of (1-&gt;4)-beta-D-xylosidic linkages in xylans.. Its pathway is glycan degradation; xylan degradation. Endo-1,4-beta-xylanase involved in the hydrolysis of xylan, a major structural heterogeneous polysaccharide found in plant biomass representing the second most abundant polysaccharide in the biosphere, after cellulose. Acts as an effector that localizes to the host nucleus to contribute to the virulence process. Induces host innate immunity responses; triggers BAK1-and SOBIR1-dependent cell death, salicylic acid signaling and jasmonic acid signaling. Does not exhibit any cell death when transiently expressed in N.benthamiana. This is Ethylene-inducing xylanase 1 from Verticillium dahliae (strain VdLs.17 / ATCC MYA-4575 / FGSC 10137) (Verticillium wilt).